The following is a 151-amino-acid chain: Large ribosomal subunit protein bL9 (151 aa).

Belongs to the bacterial ribosomal protein bL9 family.

Binds to the 23S rRNA. The polypeptide is Large ribosomal subunit protein bL9 (Francisella philomiragia subsp. philomiragia (strain ATCC 25017 / CCUG 19701 / FSC 153 / O#319-036)).